We begin with the raw amino-acid sequence, 282 residues long: MANQLILLKKDFFTDEQQAVTVADRYPQDVFAEHTHEFCELVMVWRGNGLHVLNDRPYRITRGDLFYIRAEDKHSYTSVNDLVLQNIIYCPERLKLNVNWQAMIPGFQGAQWHPHWRLGSMGMNQARQVINQLEHESNGRDPLANEMAELLFGQLVMTLKRHRYATDDLPATSRETLLDKLITALANSLECPFALDAFCQQEQCSERVLRQQFRAQTGMTINQYLRQVRICHAQYLLQHSPLMISEISMQCGFEDSNYFSVVFTRETGMTPSQWRHLSNQSD.

Residues 179-277 (DKLITALANS…GMTPSQWRHL (99 aa)) enclose the HTH araC/xylS-type domain. 2 consecutive DNA-binding regions (H-T-H motif) follow at residues 196-217 (DAFCQQEQCSERVLRQQFRAQT) and 244-267 (ISEISMQCGFEDSNYFSVVFTRET).

Binds DNA as a dimer.

It is found in the cytoplasm. Functionally, activates expression of the rhaSR operon in response to L-rhamnose. This chain is HTH-type transcriptional activator RhaR, found in Salmonella arizonae (strain ATCC BAA-731 / CDC346-86 / RSK2980).